The primary structure comprises 91 residues: N(2)-fixation sustaining protein CowN (91 aa).

This sequence belongs to the CowN family.

In terms of biological role, is required to sustain N(2)-dependent growth in the presence of low levels of carbon monoxide (CO). Probably acts by protecting the N(2) fixation ability of the nitrogenase complex, which is inactivated in the presence of CO. This Gluconacetobacter diazotrophicus (strain ATCC 49037 / DSM 5601 / CCUG 37298 / CIP 103539 / LMG 7603 / PAl5) protein is N(2)-fixation sustaining protein CowN.